The primary structure comprises 310 residues: L-lactate dehydrogenase (310 aa).

NAD(+) contacts are provided by residues valine 11, aspartate 32, tyrosine 62, and 76 to 77 (GV). Residues glutamine 79, arginine 85, and 117-120 (NPVD) each bind substrate. NAD(+) contacts are provided by residues 115-117 (ASN) and serine 140. 145–148 (DTAR) contributes to the substrate binding site. Beta-D-fructose 1,6-bisphosphate contacts are provided by arginine 150 and histidine 165. The active-site Proton acceptor is histidine 172. Threonine 227 is a binding site for substrate.

The protein belongs to the LDH/MDH superfamily. LDH family. Homotetramer.

It localises to the cytoplasm. The catalysed reaction is (S)-lactate + NAD(+) = pyruvate + NADH + H(+). It functions in the pathway fermentation; pyruvate fermentation to lactate; (S)-lactate from pyruvate: step 1/1. Its activity is regulated as follows. Allosterically activated by fructose 1,6-bisphosphate (FBP). Functionally, catalyzes the conversion of lactate to pyruvate. The chain is L-lactate dehydrogenase from Allorhizobium ampelinum (strain ATCC BAA-846 / DSM 112012 / S4) (Agrobacterium vitis (strain S4)).